A 292-amino-acid chain; its full sequence is 33 kDa chaperonin (292 aa).

Cystine bridges form between Cys230/Cys232 and Cys263/Cys266.

It belongs to the HSP33 family. Under oxidizing conditions two disulfide bonds are formed involving the reactive cysteines. Under reducing conditions zinc is bound to the reactive cysteines and the protein is inactive.

It localises to the cytoplasm. Its function is as follows. Redox regulated molecular chaperone. Protects both thermally unfolding and oxidatively damaged proteins from irreversible aggregation. Plays an important role in the bacterial defense system toward oxidative stress. This Enterobacter sp. (strain 638) protein is 33 kDa chaperonin.